A 447-amino-acid polypeptide reads, in one-letter code: MIYENLVSEAGLTQKHLIHGDKELFQHELKTIFARNWLFLTHDSLIPSPGDYVTAKMGVDEVIVSRQNDGSVRAFLNVCRHRGKTLVHAEAGNAKGFVCSYHGWGFGSNGELQSVPFEKELYGDTIKKKCLGLKEVPRIESFHGFIYGCFDAEAPTLVDYLGDAAWYLEPIFKHSGGLELVGPPGKVVIKANWKAPAENFVGDAYHVGWTHASSLRSGQSIFTPLAGNAMLPPEGAGLQMTSKYGSGMGVLWDGYSGVHSADLVPEMMAFGGAKQEKLAKEIGDVRARIYRSHLNCTVFPNNSILTCSGVFKVWNPIDENTTEVWTYAIVEKDMPEDLKRRLADAVQRTFGPAGFWESDDNDNMETESQNAKKYQSSNSDLIANLGFGKDVYGDECYPGVVAKSAIGETSYRGFYRAYQAHISSSNWAEFENTSRNWHTELTKTTDR.

Residues 37–135 (WLFLTHDSLI…IKKKCLGLKE (99 aa)) form the Rieske domain. Cysteine 79, histidine 81, cysteine 99, and histidine 102 together coordinate [2Fe-2S] cluster. The Fe cation site is built by histidine 206, histidine 211, and aspartate 360.

Belongs to the bacterial ring-hydroxylating dioxygenase alpha subunit family. The naphthalene dioxygenase (NDO) multicomponent enzyme system is composed of an electron transfer component and a dioxygenase component (iron sulfur protein (ISP)). The electron transfer component is composed of a ferredoxin reductase (NagAa) and a ferredoxin (NagAb), and the dioxygenase component is formed by a large alpha subunit (NagAc) and a small beta subunit (NagAd). [2Fe-2S] cluster is required as a cofactor. The cofactor is Fe(2+).

The catalysed reaction is naphthalene + NADH + O2 + H(+) = (1R,2S)-1,2-dihydronaphthalene-1,2-diol + NAD(+). It participates in aromatic compound metabolism; naphthalene degradation. Component of the naphthalene dioxygenase (NDO) multicomponent enzyme system which catalyzes the incorporation of both atoms of molecular oxygen into naphthalene to form cis-(1R,2S)-dihydroxy-1,2-dihydronaphthalene. The alpha subunit has a catalytic role in the holoenzyme. Also able to use styrene as substrate. This Ralstonia sp protein is Naphthalene 1,2-dioxygenase system, large oxygenase component.